Consider the following 405-residue polypeptide: 3-isopropylmalate dehydrogenase 2, chloroplastic (405 aa).

Residues 1–33 (MAAALQTNIRTVKVPATFRAVSKQSLAPFRVRC) constitute a chloroplast transit peptide. At serine 70 the chain carries Phosphoserine. 114–129 (IGGYKWDNNEKHLRPE) contacts NAD(+). Arginine 136, arginine 146, and arginine 174 together coordinate substrate. Asparagine 234 provides a ligand contact to NAD(+). Residue aspartate 264 coordinates substrate. Aspartate 264 is a binding site for Mg(2+). An NAD(+)-binding site is contributed by asparagine 265. Mg(2+) contacts are provided by aspartate 288 and aspartate 292. 318–334 (EPIHGSAPDIAGQDKAN) contributes to the NAD(+) binding site.

The protein belongs to the isocitrate and isopropylmalate dehydrogenases family. Homodimer. Mg(2+) is required as a cofactor. Mn(2+) serves as cofactor. In terms of tissue distribution, expressed at low levels in seedlings, cotyledons, hypocotyls, flowers, roots, pollen, leaves and stems.

It is found in the plastid. The protein resides in the chloroplast stroma. The catalysed reaction is (2R,3S)-3-isopropylmalate + NAD(+) = 4-methyl-2-oxopentanoate + CO2 + NADH. It functions in the pathway amino-acid biosynthesis; L-leucine biosynthesis; L-leucine from 3-methyl-2-oxobutanoate: step 3/4. With respect to regulation, regulated by a thiol-based redox modification. Its function is as follows. Involved in leucine biosynthesis; catalyzes the oxidative decarboxylation step in leucine biosynthesis (primary metabolism). Catalyzes the oxidation of 3-carboxy-2-hydroxy-4-methylpentanoate (3-isopropylmalate, 3-IPM) to 3-carboxy-4-methyl-2-oxopentanoate. The product decarboxylates to 4-methyl-2 oxopentanoate. Required during pollen development and involved in embryo sac development. The polypeptide is 3-isopropylmalate dehydrogenase 2, chloroplastic (Arabidopsis thaliana (Mouse-ear cress)).